The sequence spans 187 residues: MATPEFDLNDIKRRMQGAVASLSKDLGSLRTGRATPSLLDPIQVDAYGSMMPMAQVATVSVPEPRLLSISVWDRSMVTAVEKAIRESDLGLNPQTEGQTIRLRIPEMNEQRRKEMVKVAHKYTEEARVAVRHVRRDGLDHLKKLLKDSAISEDDEKRQATDVQKATDQYIAEIDGVLASKEKEIMQV.

This sequence belongs to the RRF family.

Its subcellular location is the cytoplasm. Its function is as follows. Responsible for the release of ribosomes from messenger RNA at the termination of protein biosynthesis. May increase the efficiency of translation by recycling ribosomes from one round of translation to another. This chain is Ribosome-recycling factor, found in Methylobacterium radiotolerans (strain ATCC 27329 / DSM 1819 / JCM 2831 / NBRC 15690 / NCIMB 10815 / 0-1).